We begin with the raw amino-acid sequence, 298 residues long: Inosose dehydratase (298 aa).

It belongs to the IolE/MocC family. Requires glutathione as cofactor. Co(2+) is required as a cofactor. Mn(2+) serves as cofactor.

The enzyme catalyses scyllo-inosose = 3D-3,5/4-trihydroxycyclohexane-1,2-dione + H2O. The protein operates within polyol metabolism; myo-inositol degradation into acetyl-CoA; acetyl-CoA from myo-inositol: step 2/7. Functionally, catalyzes the dehydration of inosose (2-keto-myo-inositol, 2KMI or 2,4,6/3,5-pentahydroxycyclohexanone) to 3D-(3,5/4)-trihydroxycyclohexane-1,2-dione (D-2,3-diketo-4-deoxy-epi-inositol). In Bacillus cereus (strain AH820), this protein is Inosose dehydratase.